The primary structure comprises 147 residues: RxLR effector protein Avr3a (147 aa).

An N-terminal signal peptide occupies residues 1–21 (MRLAIMLSATAVAINFATSSA). A RxLR-dEER motif is present at residues 44-59 (RLLRKNEENEETSEER). At K48 the chain carries N6-acetyllysine. The interval 77-147 (ALTERADAKK…YMMHLGLTGY (71 aa)) is effector domain.

Belongs to the RxLR effector family. Forms homodimers via the RxLR-dEER motif. Interacts with host E3 ligase CMPG1. Interacts with host DRP2. In terms of processing, proteolytically cleaved. The cleavage site directly after the RxLR sequence and the high conservation among other effector proteins suggest that the RxLR motif might play a crucial role in the intracellular processing before secretion. Post-translationally, glycosylated. N-acetylated at Lys-48 after cleavage.

It localises to the secreted. Its subcellular location is the host cytoplasm. Multifunctional effector that can suppress host BAK1/SERK3-mediated immunity through at least two different pathways. Manipulates plant immunity by targeting and stabilizing host E3 ligase CMPG1. Preventing the normal 26S proteasome-dependent degradation of potato CMPG1, and thus potentially of its protein substrates in the host cell, further abolishes host cell death during the biotrophic phase of infection. Also associates with and affects the function of the dynamin-related protein 2 (DRP2), a plant GTPase involved in immune receptor-mediated endocytosis. The Avr3a(EM) form evades recognition by R3a, thus does not trigger R3a-mediated hypersensitivity and does not suppress INF1-induced cell death. In Phytophthora infestans (Potato late blight agent), this protein is RxLR effector protein Avr3a.